A 253-amino-acid chain; its full sequence is UPF0758 protein Bxeno_A3578 (253 aa).

An MPN domain is found at 131–253; it reads LINSPEAVEN…VYSFARAGWP (123 aa). Zn(2+) contacts are provided by H202, H204, and D215. Positions 202-215 match the JAMM motif motif; sequence HNHPSGAVQPSASD.

This sequence belongs to the UPF0758 family.

This Paraburkholderia xenovorans (strain LB400) protein is UPF0758 protein Bxeno_A3578.